A 181-amino-acid chain; its full sequence is MSGLTIFSDSDASQPIWQSQDADAIQKQLNDIGVRFERWEASQKLSDAPSSEEVLAVYQHEIDKLVAEKGYQSWDVISMRSDNPQCAELRTKFLSEHIHHEDEVRFFVEGAGLFCLHLNGKIYQILCEKNDLLSVPAGTAHWFDMGPEPHFTAIRLFDNPEGWIAHFTGDKIADVYPKLEC.

Fe(2+) is bound by residues H97, H99, E103, and H141. Ni(2+) is bound by residues H97, H99, E103, and H141.

It belongs to the acireductone dioxygenase (ARD) family. Monomer. Fe(2+) is required as a cofactor. Ni(2+) serves as cofactor.

It carries out the reaction 1,2-dihydroxy-5-(methylsulfanyl)pent-1-en-3-one + O2 = 3-(methylsulfanyl)propanoate + CO + formate + 2 H(+). The catalysed reaction is 1,2-dihydroxy-5-(methylsulfanyl)pent-1-en-3-one + O2 = 4-methylsulfanyl-2-oxobutanoate + formate + 2 H(+). Its pathway is amino-acid biosynthesis; L-methionine biosynthesis via salvage pathway; L-methionine from S-methyl-5-thio-alpha-D-ribose 1-phosphate: step 5/6. Functionally, catalyzes 2 different reactions between oxygen and the acireductone 1,2-dihydroxy-3-keto-5-methylthiopentene (DHK-MTPene) depending upon the metal bound in the active site. Fe-containing acireductone dioxygenase (Fe-ARD) produces formate and 2-keto-4-methylthiobutyrate (KMTB), the alpha-ketoacid precursor of methionine in the methionine recycle pathway. Ni-containing acireductone dioxygenase (Ni-ARD) produces methylthiopropionate, carbon monoxide and formate, and does not lie on the methionine recycle pathway. In Pectobacterium atrosepticum (strain SCRI 1043 / ATCC BAA-672) (Erwinia carotovora subsp. atroseptica), this protein is Acireductone dioxygenase 2.